Consider the following 717-residue polypeptide: Probable cyclic nucleotide-gated ion channel 5 (717 aa).

Residues 1-102 lie on the Cytoplasmic side of the membrane; that stretch reads MAGKRENFVR…DKFLLYCNKL (102 aa). A helical membrane pass occupies residues 103 to 123; the sequence is FVASCILSVFVDPFFFYLPVI. At 124 to 136 the chain is on the extracellular side; it reads NAESKCLGIDRKL. Residues 137–157 form a helical membrane-spanning segment; sequence AITASTLRTFIDVFYLAHMAL. Residues 158-190 lie on the Cytoplasmic side of the membrane; that stretch reads QLRTAYIAPSSRVFGRGELVIDPAQIAKRYLQR. The chain crosses the membrane as a helical span at residues 191-211; it reads WFIIDFLSVLPLPQIVVWRFL. Topologically, residues 212 to 224 are extracellular; that stretch reads QSSNGSDVLATKQ. The helical transmembrane segment at 225–245 threads the bilayer; that stretch reads ALLFIVLVQYIPRFLRVLPLT. Residues 246-265 are Cytoplasmic-facing; that stretch reads SELKRTAGVFAETAWAGAAY. The helical transmembrane segment at 266 to 286 threads the bilayer; the sequence is YLLLYMLASHIVGAFWYLLAL. Residues 287–391 lie on the Extracellular side of the membrane; it reads ERNDACWQEA…GQGLETSTYP (105 aa). The helical transmembrane segment at 392–412 threads the bilayer; the sequence is MEIIFSISLAISGLILFALLI. Topologically, residues 413–717 are cytoplasmic; the sequence is GNMQTYLQSL…KPPEPDFTAD (305 aa). A nucleoside 3',5'-cyclic phosphate is bound by residues 498–628 and Glu-569; that span reads LFKS…TFRF. The calmodulin-binding stretch occupies residues 614–629; sequence FRRLHSRQVQHTFRFY. In terms of domain architecture, IQ spans 634-663; it reads RTWAACFIQAAWRRYCKRKKMEEAEAEAAA.

Belongs to the cyclic nucleotide-gated cation channel (TC 1.A.1.5) family. Homotetramer or heterotetramer.

It is found in the cell membrane. Its function is as follows. Probable cyclic nucleotide-gated ion channel. The protein is Probable cyclic nucleotide-gated ion channel 5 (CNGC5) of Arabidopsis thaliana (Mouse-ear cress).